The chain runs to 217 residues: Flagellin B1 (217 aa).

The propeptide occupies methionine 1–glycine 12.

It belongs to the archaeal flagellin family.

The protein localises to the archaeal flagellum. Flagellin is the subunit protein which polymerizes to form the filaments of archaeal flagella. The protein is Flagellin B1 (flaB1) of Methanocaldococcus jannaschii (strain ATCC 43067 / DSM 2661 / JAL-1 / JCM 10045 / NBRC 100440) (Methanococcus jannaschii).